A 239-amino-acid polypeptide reads, in one-letter code: Orotidine 5'-phosphate decarboxylase (239 aa).

Residues Asp10, Lys33, 60–69 (DLKLYDIPNT), Thr124, Arg186, Gln195, Gly215, and Arg216 each bind substrate. Lys62 functions as the Proton donor in the catalytic mechanism.

It belongs to the OMP decarboxylase family. Type 1 subfamily. As to quaternary structure, homodimer.

It catalyses the reaction orotidine 5'-phosphate + H(+) = UMP + CO2. The protein operates within pyrimidine metabolism; UMP biosynthesis via de novo pathway; UMP from orotate: step 2/2. Its function is as follows. Catalyzes the decarboxylation of orotidine 5'-monophosphate (OMP) to uridine 5'-monophosphate (UMP). The polypeptide is Orotidine 5'-phosphate decarboxylase (Latilactobacillus sakei subsp. sakei (strain 23K) (Lactobacillus sakei subsp. sakei)).